Consider the following 400-residue polypeptide: Haptoglobin (400 aa).

The first 18 residues, 1–18 (MSALPVVVTLLLCGQLLA), serve as a signal peptide directing secretion. Sushi domains lie at 28-83 (DSCP…ECED) and 84-141 (ASCP…ECEA). 3 disulfide bridges follow: C49/C81, C105/C139, and C143/C260. The Peptidase S1 domain occupies 156-398 (IIGGSLDAKG…ILDWVRKTIA (243 aa)). 3 N-linked (GlcNAc...) asparagine glycosylation sites follow: N285, N309, and N315. 2 disulfide bridges follow: C303/C334 and C345/C375. The segment at 312 to 317 (VPENKT) is interaction with CD163.

This sequence belongs to the peptidase S1 family. In terms of assembly, tetramer of two alpha and two beta chains; disulfide-linked. The hemoglobin/haptoglobin complex is composed of a haptoglobin dimer bound to two hemoglobin alpha-beta dimers. Interacts with CD163. Interacts with ERGIC3. Expressed by the liver and secreted in plasma.

It is found in the secreted. The protein resides in the extracellular space. In terms of biological role, as a result of hemolysis, hemoglobin is found to accumulate in the kidney and is secreted in the urine. Haptoglobin captures, and combines with free plasma hemoglobin to allow hepatic recycling of heme iron and to prevent kidney damage. Haptoglobin also acts as an antioxidant, has antibacterial activity and plays a role in modulating many aspects of the acute phase response. Hemoglobin/haptoglobin complexes are rapidly cleared by the macrophage CD163 scavenger receptor expressed on the surface of liver Kupfer cells through an endocytic lysosomal degradation pathway. The polypeptide is Haptoglobin (HP) (Cervus elaphus (Red deer)).